A 504-amino-acid chain; its full sequence is Probable alpha-L-arabinofuranosidase C (504 aa).

4 N-linked (GlcNAc...) asparagine glycosylation sites follow: asparagine 152, asparagine 181, asparagine 269, and asparagine 467.

It belongs to the glycosyl hydrolase 51 family.

The protein localises to the secreted. It catalyses the reaction Hydrolysis of terminal non-reducing alpha-L-arabinofuranoside residues in alpha-L-arabinosides.. It functions in the pathway glycan metabolism; L-arabinan degradation. In terms of biological role, alpha-L-arabinofuranosidase involved in the degradation of arabinoxylan, a major component of plant hemicellulose. Acts only on small linear 1,5-alpha-linked L-arabinofuranosyl oligosaccharides. This Aspergillus terreus (strain NIH 2624 / FGSC A1156) protein is Probable alpha-L-arabinofuranosidase C (abfC).